Reading from the N-terminus, the 129-residue chain is Phosphoribosyl-AMP cyclohydrolase (129 aa).

A Mg(2+)-binding site is contributed by Asp85. Position 86 (Cys86) interacts with Zn(2+). Mg(2+) is bound by residues Asp87 and Asp89. Positions 102 and 109 each coordinate Zn(2+).

Belongs to the PRA-CH family. As to quaternary structure, homodimer. Mg(2+) serves as cofactor. The cofactor is Zn(2+).

The protein localises to the cytoplasm. It carries out the reaction 1-(5-phospho-beta-D-ribosyl)-5'-AMP + H2O = 1-(5-phospho-beta-D-ribosyl)-5-[(5-phospho-beta-D-ribosylamino)methylideneamino]imidazole-4-carboxamide. It participates in amino-acid biosynthesis; L-histidine biosynthesis; L-histidine from 5-phospho-alpha-D-ribose 1-diphosphate: step 3/9. Its function is as follows. Catalyzes the hydrolysis of the adenine ring of phosphoribosyl-AMP. The polypeptide is Phosphoribosyl-AMP cyclohydrolase (Methanococcus maripaludis (strain C5 / ATCC BAA-1333)).